The primary structure comprises 213 residues: uncharacterized protein (213 aa).

3 residues coordinate S-adenosyl-L-methionine: glycine 53, glutamate 74, and aspartate 96.

This sequence belongs to the methyltransferase superfamily. YrrT family.

Could be a S-adenosyl-L-methionine-dependent methyltransferase. This is an uncharacterized protein from Bacillus pumilus (strain SAFR-032).